Reading from the N-terminus, the 232-residue chain is Large ribosomal subunit protein uL1 (232 aa).

This sequence belongs to the universal ribosomal protein uL1 family. As to quaternary structure, part of the 50S ribosomal subunit.

Functionally, binds directly to 23S rRNA. The L1 stalk is quite mobile in the ribosome, and is involved in E site tRNA release. In terms of biological role, protein L1 is also a translational repressor protein, it controls the translation of the L11 operon by binding to its mRNA. The sequence is that of Large ribosomal subunit protein uL1 from Burkholderia lata (strain ATCC 17760 / DSM 23089 / LMG 22485 / NCIMB 9086 / R18194 / 383).